The primary structure comprises 214 residues: uncharacterized protein (214 aa).

The next 2 helical transmembrane spans lie at 23–43 (ILVG…VAAA) and 65–85 (VLYA…PVLL). Residues 96 to 115 (ATRPTGASVRGGRSIGSGHP) form a disordered region. The next 2 helical transmembrane spans lie at 152–172 (VVLT…TYLM) and 181–201 (WISY…EWLY).

It localises to the cell membrane. This is an uncharacterized protein from Mycobacterium tuberculosis (strain CDC 1551 / Oshkosh).